The chain runs to 67 residues: ATP synthase F(0) complex subunit 8 (67 aa).

A helical membrane pass occupies residues 8 to 24; it reads TWFINIVSMILTLFIVF. K54 carries the post-translational modification N6-acetyllysine; alternate. K54 carries the post-translational modification N6-succinyllysine; alternate. K57 is subject to N6-acetyllysine.

Belongs to the ATPase protein 8 family. In terms of assembly, component of the ATP synthase complex composed at least of ATP5F1A/subunit alpha, ATP5F1B/subunit beta, ATP5MC1/subunit c (homooctomer), MT-ATP6/subunit a, MT-ATP8/subunit 8, ATP5ME/subunit e, ATP5MF/subunit f, ATP5MG/subunit g, ATP5MK/subunit k, ATP5MJ/subunit j, ATP5F1C/subunit gamma, ATP5F1D/subunit delta, ATP5F1E/subunit epsilon, ATP5PF/subunit F6, ATP5PB/subunit b, ATP5PD/subunit d, ATP5PO/subunit OSCP. ATP synthase complex consists of a soluble F(1) head domain (subunits alpha(3) and beta(3)) - the catalytic core - and a membrane F(0) domain - the membrane proton channel (subunits c, a, 8, e, f, g, k and j). These two domains are linked by a central stalk (subunits gamma, delta, and epsilon) rotating inside the F1 region and a stationary peripheral stalk (subunits F6, b, d, and OSCP). Interacts with PRICKLE3.

Its subcellular location is the mitochondrion membrane. Subunit 8, of the mitochondrial membrane ATP synthase complex (F(1)F(0) ATP synthase or Complex V) that produces ATP from ADP in the presence of a proton gradient across the membrane which is generated by electron transport complexes of the respiratory chain. ATP synthase complex consist of a soluble F(1) head domain - the catalytic core - and a membrane F(1) domain - the membrane proton channel. These two domains are linked by a central stalk rotating inside the F(1) region and a stationary peripheral stalk. During catalysis, ATP synthesis in the catalytic domain of F(1) is coupled via a rotary mechanism of the central stalk subunits to proton translocation. In vivo, can only synthesize ATP although its ATP hydrolase activity can be activated artificially in vitro. Part of the complex F(0) domain. The polypeptide is ATP synthase F(0) complex subunit 8 (Equus asinus (Donkey)).